A 106-amino-acid chain; its full sequence is Putative double-stranded DNA mimic protein VV1228 (106 aa).

It belongs to the putative dsDNA mimic protein family.

In terms of biological role, may act as a double-stranded DNA (dsDNA) mimic. Probably regulates the activity of a dsDNA-binding protein. In Vibrio vulnificus (strain YJ016), this protein is Putative double-stranded DNA mimic protein VV1228.